A 568-amino-acid polypeptide reads, in one-letter code: Kelch-like protein 12 (568 aa).

A BTB domain is found at 33 to 100 (CDVTLRVEQK…VYTETVHVTV (68 aa)). A BACK domain is found at 135-236 (CLGIRDFAET…LTPRYITDVI (102 aa)). Kelch repeat units lie at residues 282–329 (VLLV…SLHD), 331–379 (IYVI…TLGD), 380–426 (MIYV…VASG), 427–473 (IIYC…LLND), 475–520 (IYVV…VLRG), and 522–567 (LYAI…VLRE). Residues 405–568 (QWSMLGDMQT…DAGVCVLREK (164 aa)) are interaction with DVL3.

As to quaternary structure, component of the BCR(KLHL12) E3 ubiquitin ligase complex, at least composed of CUL3 and KLHL12 and RBX1. This complex interacts with DVL3 upon activation of the Wnt signaling pathway by WNT3A. Interacts with DRD4, KLHL2 and SEC31A. Interacts with PEF1 and PDCD6/ALG-2; interaction takes place in response to cytosolic calcium increase and leads to bridge together the BCR(KLHL12) complex and SEC31 (SEC31A or SEC31B). Ubiquitinated by the SCF(FBXL17) complex, leading to its degradation by the proteasome: ubiquitination by the SCF(FBXL17) complex takes place when aberrant BTB domain dimers are formed.

Its subcellular location is the cytoplasmic vesicle. The protein localises to the COPII-coated vesicle. It participates in protein modification; protein ubiquitination. Its function is as follows. Substrate-specific adapter of a BCR (BTB-CUL3-RBX1) E3 ubiquitin ligase complex that acts as a negative regulator of Wnt signaling pathway and ER-Golgi transport. The BCR(KLHL12) complex is involved in ER-Golgi transport by regulating the size of COPII coats, thereby playing a key role in collagen export, which is required for embryonic stem (ES) cells division: BCR(KLHL12) acts by mediating monoubiquitination of SEC31 (SEC31A or SEC31B). The BCR(KLHL12) complex is also involved in neural crest specification: in response to cytosolic calcium increase, interacts with the heterodimer formed with PEF1 and PDCD6/ALG-2, leading to bridge together the BCR(KLHL12) complex and SEC31 (SEC31A or SEC31B), promoting monoubiquitination of SEC31 and subsequent collagen export. As part of the BCR(KLHL12) complex, also acts as a negative regulator of the Wnt signaling pathway by mediating ubiquitination and subsequent proteolysis of DVL3. The BCR(KLHL12) complex also mediates polyubiquitination of DRD4 and PEF1, without leading to degradation of these proteins. This chain is Kelch-like protein 12 (Klhl12), found in Rattus norvegicus (Rat).